Here is a 94-residue protein sequence, read N- to C-terminus: Co-chaperonin GroES (94 aa).

Belongs to the GroES chaperonin family. As to quaternary structure, heptamer of 7 subunits arranged in a ring. Interacts with the chaperonin GroEL.

The protein resides in the cytoplasm. Functionally, together with the chaperonin GroEL, plays an essential role in assisting protein folding. The GroEL-GroES system forms a nano-cage that allows encapsulation of the non-native substrate proteins and provides a physical environment optimized to promote and accelerate protein folding. GroES binds to the apical surface of the GroEL ring, thereby capping the opening of the GroEL channel. In Staphylococcus epidermidis, this protein is Co-chaperonin GroES.